Here is a 95-residue protein sequence, read N- to C-terminus: MKLQPLADRILVKRLAEETKTKGGIIIPDTAKEKPAEGEIVAVGPGRNAEDGTKIALEVKVGDRVLFGKYSGTEVKIEGEEYLIMREDDVLGIVQ.

Belongs to the GroES chaperonin family. In terms of assembly, heptamer of 7 subunits arranged in a ring. Interacts with the chaperonin GroEL.

The protein localises to the cytoplasm. Functionally, together with the chaperonin GroEL, plays an essential role in assisting protein folding. The GroEL-GroES system forms a nano-cage that allows encapsulation of the non-native substrate proteins and provides a physical environment optimized to promote and accelerate protein folding. GroES binds to the apical surface of the GroEL ring, thereby capping the opening of the GroEL channel. In Desulfatibacillum aliphaticivorans, this protein is Co-chaperonin GroES.